Here is a 263-residue protein sequence, read N- to C-terminus: Hydroxyacylglutathione hydrolase (263 aa).

Zn(2+) contacts are provided by His-55, His-57, Asp-59, His-60, His-117, Asp-134, and His-172.

Belongs to the metallo-beta-lactamase superfamily. Glyoxalase II family. Monomer. Zn(2+) is required as a cofactor.

The catalysed reaction is an S-(2-hydroxyacyl)glutathione + H2O = a 2-hydroxy carboxylate + glutathione + H(+). The protein operates within secondary metabolite metabolism; methylglyoxal degradation; (R)-lactate from methylglyoxal: step 2/2. In terms of biological role, thiolesterase that catalyzes the hydrolysis of S-D-lactoyl-glutathione to form glutathione and D-lactic acid. This chain is Hydroxyacylglutathione hydrolase, found in Shewanella baltica (strain OS223).